The primary structure comprises 193 residues: Non-specific lipid transfer protein GPI-anchored 2 (193 aa).

A signal peptide spans 1–22; that stretch reads MSNVVVIAVVLIVASLTGHVSA. Intrachain disulfides connect cysteine 38–cysteine 83, cysteine 48–cysteine 67, cysteine 68–cysteine 110, and cysteine 81–cysteine 120. N-linked (GlcNAc...) asparagine glycosylation is present at asparagine 44. Residues 143–164 are disordered; sequence APGSMSGAESPGGFGSGPSASR. The GPI-anchor amidated glycine moiety is linked to residue glycine 165. A propeptide spans 166-193 (removed in mature form); sequence SDAPSSAPYSLFLNLIIFPLAFAFYIFC.

The protein belongs to the plant LTP family. In terms of processing, O-glycosylated on hydroxyprolines; noncontiguous hydroxylproline residues are glycosylated with arabinogalactan. Up-regulated in the epidermis of top stems. Expressed in roots, cotyledons, seedlings, leaves, stems, buds, flower and silique walls. Preferentially expressed in the shoot apical meristem and the root meristem. Also detected in expanding leaves and petals, developing flowers, and elongating pistils, stamens and siliques.

It localises to the cell membrane. Its function is as follows. Lipid transfer protein that, together with LTPG1, binds to lipids and functions as a component of the cuticular lipid export machinery that performs extensive export of intracellular lipids (e.g. C29 alkane) from epidermal cells to the surface to build the cuticular wax layer and silique walls. Contributes to pre-invasive defense against some non-host powdery mildew pathogens by preventing the penetration of the epidermal cell wall by the fungal agents (e.g. Blumeria graminis f. sp. hordei (Bgh)). Involved in seed and ovule maturation and development, probably by regulating the fatty acids homeostasis during suberin and sporopollenin biosynthesis or deposition. In Arabidopsis thaliana (Mouse-ear cress), this protein is Non-specific lipid transfer protein GPI-anchored 2.